Reading from the N-terminus, the 625-residue chain is Voltage-gated potassium channel KCNC4 (625 aa).

2 disordered regions span residues 1-24 (MISSVCVSSYRGRKSGNKPPSKTC) and 65-86 (LADPDGGGRPESDGGGAGSSGS). Residues 1 to 28 (MISSVCVSSYRGRKSGNKPPSKTCLKEE) form an inactivation gate region. Residues 1 to 227 (MISSVCVSSY…EDPYSSRAAR (227 aa)) lie on the Cytoplasmic side of the membrane. Phosphoserine is present on residues Ser8, Ser9, Ser15, and Ser21. Positions 77–86 (DGGGAGSSGS) are enriched in gly residues. 4 residues coordinate Zn(2+): His117, Cys123, Cys144, and Cys145. Residues 228–248 (VVAFASLFFILVSITTFCLET) traverse the membrane as a helical segment. N-linked (GlcNAc...) asparagine glycans are attached at residues Asn257 and Asn266. Residues 279–299 (EPILTYIEGVCVMWFTLEFLV) form a helical membrane-spanning segment. Residues 300–313 (RIVCCPDTLDFVKN) lie on the Cytoplasmic side of the membrane. Residues 314–334 (LLNIIDFVAILPFYLEVGLSG) traverse the membrane as a helical segment. A helical; Voltage-sensor membrane pass occupies residues 346–365 (FLRVVRFVRILRIFKLTRHF). The Cytoplasmic portion of the chain corresponds to 366–381 (VGLRVLGHTLRASTNE). A helical transmembrane segment spans residues 382–402 (FLLLIIFLALGVLIFATMIYY). Positions 437, 438, 439, and 440 each coordinate K(+). A Selectivity filter motif is present at residues 437–442 (TLGYGD). A helical membrane pass occupies residues 453–473 (VGALCALAGVLTIAMPVPVIV). Residues 474-625 (NNFGMYYSLA…CVPVSHTCAL (152 aa)) are Cytoplasmic-facing. The interval 490 to 581 (PKKRKKHVPR…RRALRRSGTR (92 aa)) is disordered. A compositionally biased stretch (basic and acidic residues) spans 528–543 (AREEGMVERKRADSKQ).

It belongs to the potassium channel family. C (Shaw) (TC 1.A.1.2) subfamily. Kv3.4/KCNC4 sub-subfamily. Homotetramer. Heterotetramer of potassium channel proteins. In terms of processing, phosphorylation of serine residues in the inactivation gate inhibits rapid channel closure.

Its subcellular location is the membrane. It carries out the reaction K(+)(in) = K(+)(out). Its function is as follows. Voltage-gated potassium channel that opens in response to the voltage difference across the membrane, forming a potassium-selective channel through which potassium ions pass in accordance with their electrochemical gradient. The channel displays rapid activation and inactivation kinetics. The polypeptide is Voltage-gated potassium channel KCNC4 (Rattus norvegicus (Rat)).